We begin with the raw amino-acid sequence, 190 residues long: Acireductone dioxygenase (190 aa).

Residues histidine 101, histidine 103, glutamate 107, and histidine 145 each contribute to the Fe(2+) site. Histidine 101, histidine 103, glutamate 107, and histidine 145 together coordinate Ni(2+).

This sequence belongs to the acireductone dioxygenase (ARD) family. Monomer. The cofactor is Fe(2+). Ni(2+) serves as cofactor.

The enzyme catalyses 1,2-dihydroxy-5-(methylsulfanyl)pent-1-en-3-one + O2 = 3-(methylsulfanyl)propanoate + CO + formate + 2 H(+). It catalyses the reaction 1,2-dihydroxy-5-(methylsulfanyl)pent-1-en-3-one + O2 = 4-methylsulfanyl-2-oxobutanoate + formate + 2 H(+). It functions in the pathway amino-acid biosynthesis; L-methionine biosynthesis via salvage pathway; L-methionine from S-methyl-5-thio-alpha-D-ribose 1-phosphate: step 5/6. Functionally, catalyzes 2 different reactions between oxygen and the acireductone 1,2-dihydroxy-3-keto-5-methylthiopentene (DHK-MTPene) depending upon the metal bound in the active site. Fe-containing acireductone dioxygenase (Fe-ARD) produces formate and 2-keto-4-methylthiobutyrate (KMTB), the alpha-ketoacid precursor of methionine in the methionine recycle pathway. Ni-containing acireductone dioxygenase (Ni-ARD) produces methylthiopropionate, carbon monoxide and formate, and does not lie on the methionine recycle pathway. The polypeptide is Acireductone dioxygenase (Saccharopolyspora erythraea (strain ATCC 11635 / DSM 40517 / JCM 4748 / NBRC 13426 / NCIMB 8594 / NRRL 2338)).